We begin with the raw amino-acid sequence, 288 residues long: Plasmodesmata-located protein 6 (288 aa).

The first 22 residues, 1–22, serve as a signal peptide directing secretion; the sequence is MFATKTVLFIAVVSLLGTFSSA. The Extracellular segment spans residues 23 to 256; that stretch reads AVDTFIYGGC…NNDDDEIEKT (234 aa). 2 Gnk2-homologous domains span residues 25–132 and 137–234; these read DTFI…NTTF and DKTV…ARGG. Cystine bridges form between cysteine 32–cysteine 110, cysteine 84–cysteine 95, cysteine 98–cysteine 123, cysteine 145–cysteine 212, cysteine 188–cysteine 197, and cysteine 200–cysteine 225. A helical membrane pass occupies residues 257–277; that stretch reads LAIIVGLIAGVTLLVVFLSFM. The segment at 257–277 is necessary and sufficient for plasmodesmal targeting; the sequence is LAIIVGLIAGVTLLVVFLSFM. Topologically, residues 278 to 288 are cytoplasmic; that stretch reads AKSCERGKGGK.

This sequence belongs to the cysteine-rich repeat secretory protein family. Plasmodesmata-located proteins (PDLD) subfamily. In terms of assembly, (Microbial infection) Interacts with Grapevine fanleaf virus (GFLV) 2B-MP. Highly expressed in inflorescence silique (at mRNA level).

It localises to the cell membrane. The protein resides in the cell junction. Its subcellular location is the plasmodesma. Functionally, modulates cell-to-cell trafficking. This Arabidopsis thaliana (Mouse-ear cress) protein is Plasmodesmata-located protein 6.